A 403-amino-acid chain; its full sequence is Enoyl-[acyl-carrier-protein] reductase [NADH] (403 aa).

Residues 49–54 (GASSGY), 75–76 (FE), 112–113 (DA), and 141–142 (LA) contribute to the NAD(+) site. Position 227 (Tyr-227) interacts with substrate. Tyr-237 acts as the Proton donor in catalysis. NAD(+) is bound by residues Lys-246 and 276–278 (VVT).

This sequence belongs to the TER reductase family. As to quaternary structure, monomer.

It catalyses the reaction a 2,3-saturated acyl-[ACP] + NAD(+) = a (2E)-enoyl-[ACP] + NADH + H(+). Its pathway is lipid metabolism; fatty acid biosynthesis. Involved in the final reduction of the elongation cycle of fatty acid synthesis (FAS II). Catalyzes the reduction of a carbon-carbon double bond in an enoyl moiety that is covalently linked to an acyl carrier protein (ACP). This chain is Enoyl-[acyl-carrier-protein] reductase [NADH], found in Pseudomonas putida (strain ATCC 47054 / DSM 6125 / CFBP 8728 / NCIMB 11950 / KT2440).